Reading from the N-terminus, the 607-residue chain is Arginine decarboxylase (607 aa).

Residue Lys-104 is modified to N6-(pyridoxal phosphate)lysine. Leu-290–Tyr-300 is a binding site for substrate.

It belongs to the Orn/Lys/Arg decarboxylase class-II family. SpeA subfamily. Pyridoxal 5'-phosphate serves as cofactor. The cofactor is Mg(2+).

The enzyme catalyses L-arginine + H(+) = agmatine + CO2. It participates in amine and polyamine biosynthesis; agmatine biosynthesis; agmatine from L-arginine: step 1/1. The polypeptide is Arginine decarboxylase (SPE1) (Avena sativa (Oat)).